Here is a 307-residue protein sequence, read N- to C-terminus: Pseudouridine-5'-phosphate glycosidase (307 aa).

Glu25 serves as the catalytic Proton donor. The substrate site is built by Lys86 and Val106. A Mn(2+)-binding site is contributed by Asp138. Residue 140–142 (SAD) coordinates substrate. Lys159 serves as the catalytic Nucleophile.

The protein belongs to the pseudouridine-5'-phosphate glycosidase family. Homotrimer. It depends on Mn(2+) as a cofactor.

It carries out the reaction D-ribose 5-phosphate + uracil = psi-UMP + H2O. Functionally, catalyzes the reversible cleavage of pseudouridine 5'-phosphate (PsiMP) to ribose 5-phosphate and uracil. Functions biologically in the cleavage direction, as part of a pseudouridine degradation pathway. In Caldanaerobacter subterraneus subsp. tengcongensis (strain DSM 15242 / JCM 11007 / NBRC 100824 / MB4) (Thermoanaerobacter tengcongensis), this protein is Pseudouridine-5'-phosphate glycosidase.